The following is a 217-amino-acid chain: Somatotropin (217 aa).

Positions 1–27 are cleaved as a signal peptide; sequence MMAAGPRASLLLAFALLCLPWTQEVGA. Histidine 46 provides a ligand contact to Zn(2+). Cysteines 79 and 190 form a disulfide. Serine 132 bears the Phosphoserine mark. Position 199 (glutamate 199) interacts with Zn(2+). Residues cysteine 207 and cysteine 215 are joined by a disulfide bond.

The protein belongs to the somatotropin/prolactin family.

It is found in the secreted. Its function is as follows. Plays an important role in growth control. Its major role in stimulating body growth is to stimulate the liver and other tissues to secrete IGF1. It stimulates both the differentiation and proliferation of myoblasts. It also stimulates amino acid uptake and protein synthesis in muscle and other tissues. The sequence is that of Somatotropin (GH1) from Cervus elaphus (Red deer).